The primary structure comprises 192 residues: Adenylate kinase (192 aa).

Residue 12–17 coordinates ATP; the sequence is GSGKTT. Positions 33-62 are NMP; the sequence is STGDLLRAEVAKDSELGKKIDKIISGGNLV. AMP-binding positions include threonine 34, arginine 39, 60–62, 87–90, and glutamine 94; these read NLV and GYPR. The LID stretch occupies residues 129-135; the sequence is GRARGAD. Arginine 130 serves as a coordination point for ATP. AMP-binding residues include arginine 132 and arginine 144. Arginine 172 serves as a coordination point for ATP.

Belongs to the adenylate kinase family. Monomer.

Its subcellular location is the cytoplasm. The enzyme catalyses AMP + ATP = 2 ADP. It functions in the pathway purine metabolism; AMP biosynthesis via salvage pathway; AMP from ADP: step 1/1. Its function is as follows. Catalyzes the reversible transfer of the terminal phosphate group between ATP and AMP. Plays an important role in cellular energy homeostasis and in adenine nucleotide metabolism. The protein is Adenylate kinase of Campylobacter hominis (strain ATCC BAA-381 / DSM 21671 / CCUG 45161 / LMG 19568 / NCTC 13146 / CH001A).